We begin with the raw amino-acid sequence, 96 residues long: Large ribosomal subunit protein uL23 (96 aa).

This sequence belongs to the universal ribosomal protein uL23 family. Part of the 50S ribosomal subunit. Contacts protein L29, and trigger factor when it is bound to the ribosome.

Its function is as follows. One of the early assembly proteins it binds 23S rRNA. One of the proteins that surrounds the polypeptide exit tunnel on the outside of the ribosome. Forms the main docking site for trigger factor binding to the ribosome. This is Large ribosomal subunit protein uL23 from Vesicomyosocius okutanii subsp. Calyptogena okutanii (strain HA).